Here is a 154-residue protein sequence, read N- to C-terminus: Ribosome maturation factor RimP (154 aa).

This sequence belongs to the RimP family.

The protein resides in the cytoplasm. Its function is as follows. Required for maturation of 30S ribosomal subunits. The protein is Ribosome maturation factor RimP of Carboxydothermus hydrogenoformans (strain ATCC BAA-161 / DSM 6008 / Z-2901).